We begin with the raw amino-acid sequence, 172 residues long: Large ribosomal subunit protein uL10 (172 aa).

It belongs to the universal ribosomal protein uL10 family. In terms of assembly, part of the ribosomal stalk of the 50S ribosomal subunit. The N-terminus interacts with L11 and the large rRNA to form the base of the stalk. The C-terminus forms an elongated spine to which L12 dimers bind in a sequential fashion forming a multimeric L10(L12)X complex.

Forms part of the ribosomal stalk, playing a central role in the interaction of the ribosome with GTP-bound translation factors. The polypeptide is Large ribosomal subunit protein uL10 (Rhizobium leguminosarum bv. trifolii (strain WSM2304)).